The following is a 380-amino-acid chain: Flap endonuclease 1 (380 aa).

Residues 1–104 (MGIHGLTKLI…AELEKRGEKR (104 aa)) are N-domain. Residue Asp34 participates in Mg(2+) binding. DNA-binding residues include Arg47 and Arg70. Asp86, Glu158, Glu160, Asp179, and Asp181 together coordinate Mg(2+). The interval 122–253 (NIDKFSKRLV…KRAIDLIKQH (132 aa)) is I-domain. Glu158 contributes to the DNA binding site. Gly231 and Asp233 together coordinate DNA. Asp233 lines the Mg(2+) pocket. Residues 336–344 (TQGRLDSFF) are interaction with PCNA. Positions 351-380 (SSKRKEPELKGSAKKKQKTGATPGKFKKGK) are disordered.

It belongs to the XPG/RAD2 endonuclease family. FEN1 subfamily. In terms of assembly, interacts with PCNA. Three molecules of fen1 bind to one PCNA trimer with each molecule binding to one PCNA monomer. PCNA stimulates the nuclease activity without altering cleavage specificity. Requires Mg(2+) as cofactor. Post-translationally, phosphorylated. Phosphorylation upon DNA damage induces relocalization to the nuclear plasma.

It is found in the nucleus. The protein localises to the nucleolus. The protein resides in the nucleoplasm. Its subcellular location is the mitochondrion. Its function is as follows. Structure-specific nuclease with 5'-flap endonuclease and 5'-3' exonuclease activities involved in DNA replication and repair. During DNA replication, cleaves the 5'-overhanging flap structure that is generated by displacement synthesis when DNA polymerase encounters the 5'-end of a downstream Okazaki fragment. It enters the flap from the 5'-end and then tracks to cleave the flap base, leaving a nick for ligation. Also involved in the long patch base excision repair (LP-BER) pathway, by cleaving within the apurinic/apyrimidinic (AP) site-terminated flap. Acts as a genome stabilization factor that prevents flaps from equilibrating into structures that lead to duplications and deletions. Also possesses 5'-3' exonuclease activity on nicked or gapped double-stranded DNA, and exhibits RNase H activity. Also involved in replication and repair of rDNA and in repairing mitochondrial DNA. The protein is Flap endonuclease 1 (fen1) of Anoplopoma fimbria (Sablefish).